The sequence spans 283 residues: Gap junction beta-1 protein (283 aa).

Topologically, residues 1-22 are cytoplasmic; sequence MNWTGLYTLLSGVNRHSTAIGR. The helical transmembrane segment at 23-45 threads the bilayer; the sequence is VWLSVIFIFRIMVLVVAAESVWG. Residues 46–75 are Extracellular-facing; the sequence is DEKSSFICNTLQPGCNSVCYDHFFPISHVR. Residues 76-95 form a helical membrane-spanning segment; that stretch reads LWSLQLILVSTPALLVAMHV. Topologically, residues 96–130 are cytoplasmic; sequence AHQQHIEKKMLRLEGHGDPLHLEEVKRHKVHISGT. Residues 131-153 traverse the membrane as a helical segment; the sequence is LWWTYVISVVFRLLFEAVFMYVF. Residues 154–191 lie on the Extracellular side of the membrane; sequence YLLYPGYAMVRLVKCEAFPCPNTVDCFVSRPTEKTVFT. A helical membrane pass occupies residues 192-214; that stretch reads VFMLAASGICIILNVAEVVYLII. Over 215 to 283 the chain is Cytoplasmic; the sequence is RACARRAQRR…AEKSDRCSAC (69 aa). A phosphoserine mark is found at serine 233, serine 258, serine 266, and serine 277.

Belongs to the connexin family. Beta-type (group I) subfamily. A connexon is composed of a hexamer of connexins. Interacts with CNST.

The protein localises to the cell membrane. The protein resides in the cell junction. It is found in the gap junction. Its function is as follows. One gap junction consists of a cluster of closely packed pairs of transmembrane channels, the connexons, through which materials of low MW diffuse from one cell to a neighboring cell. In Mus musculus (Mouse), this protein is Gap junction beta-1 protein (Gjb1).